A 255-amino-acid chain; its full sequence is MILVIDVGNTNTVFGVYDGKKLLNHWRMETSKGKTSDEYGMFIVSLLSYEKIDVGKIEAVVIASVVPPIMYSLEHAIRKYFKLEPMVVGPGIKTGINIKYENPREVGADRIINAVAALELYGGPLIIVDFGTATTFCAVSSKGEYLGGVICPGIKISAEALFQKTAKLPKIDLVKPETVIGRNTVSSMQSGIIYGYVGEVDYIVRRMKKEMKEDNIKVIATGGLARLIASESETIDEINGLLTLEGLRIIYERNK.

Residue 6–13 (DVGNTNTV) coordinates ATP. Substrate-binding positions include Tyr-100 and 107–110 (GADR). The Proton acceptor role is filled by Asp-109. Asp-129 contacts K(+). Thr-132 provides a ligand contact to ATP. Position 184 (Thr-184) interacts with substrate.

It belongs to the type III pantothenate kinase family. In terms of assembly, homodimer. NH4(+) is required as a cofactor. It depends on K(+) as a cofactor.

Its subcellular location is the cytoplasm. The catalysed reaction is (R)-pantothenate + ATP = (R)-4'-phosphopantothenate + ADP + H(+). The protein operates within cofactor biosynthesis; coenzyme A biosynthesis; CoA from (R)-pantothenate: step 1/5. In terms of biological role, catalyzes the phosphorylation of pantothenate (Pan), the first step in CoA biosynthesis. This chain is Type III pantothenate kinase, found in Acetivibrio thermocellus (strain ATCC 27405 / DSM 1237 / JCM 9322 / NBRC 103400 / NCIMB 10682 / NRRL B-4536 / VPI 7372) (Clostridium thermocellum).